The following is an 86-amino-acid chain: F(1)-ATPase inhibitor STF1, mitochondrial (86 aa).

The transit peptide at 1-23 directs the protein to the mitochondrion; sequence MLNRCISRNTRLPVNLRIASRFY. Serine 24 carries the phosphoserine modification.

The protein belongs to the ATPase inhibitor family. As to quaternary structure, monomer and homodimer. Monomeric at pH 5.0 and dimeric at either pH 6.5 or 8.0. The protein aggregates increasingly strongly with increasing pH.

The protein resides in the mitochondrion. In terms of biological role, endogenous low-affinity ATPase inhibitor, which inhibits specifically the reverse ATPase reaction of mitochondrial F(1)F(0)-type ATP synthase. Found to stabilize, together with STF2, a complex of intrinsic ATPase inhibitor INH1 and proton-translocating ATPase in mitochondrial membranes. Binds directly to purified F1-ATPase. In Saccharomyces cerevisiae (strain ATCC 204508 / S288c) (Baker's yeast), this protein is F(1)-ATPase inhibitor STF1, mitochondrial (STF1).